Here is a 631-residue protein sequence, read N- to C-terminus: Probable protein phosphatase 2C 31 (631 aa).

2 disordered regions span residues glycine 119–phenylalanine 142 and leucine 205–asparagine 231. Polar residues predominate over residues alanine 131–aspartate 140. The PPM-type phosphatase domain occupies aspartate 221 to phenylalanine 622. Mn(2+) contacts are provided by aspartate 261 and glycine 262. The tract at residues glycine 324–aspartate 347 is disordered. Residues aspartate 550 and aspartate 613 each coordinate Mn(2+).

Belongs to the PP2C family. Mg(2+) is required as a cofactor. Requires Mn(2+) as cofactor.

It carries out the reaction O-phospho-L-seryl-[protein] + H2O = L-seryl-[protein] + phosphate. The enzyme catalyses O-phospho-L-threonyl-[protein] + H2O = L-threonyl-[protein] + phosphate. The polypeptide is Probable protein phosphatase 2C 31 (Oryza sativa subsp. japonica (Rice)).